The chain runs to 855 residues: DNA mismatch repair protein MutS (855 aa).

616–623 (GPNMGGKS) serves as a coordination point for ATP.

This sequence belongs to the DNA mismatch repair MutS family.

Its function is as follows. This protein is involved in the repair of mismatches in DNA. It is possible that it carries out the mismatch recognition step. This protein has a weak ATPase activity. This Salmonella newport (strain SL254) protein is DNA mismatch repair protein MutS.